The primary structure comprises 384 residues: Heparin lyase I (384 aa).

Residues 1–21 (MKKQILYLIVLQQLFLCSAYA) form the signal peptide. Glutamine 22 is modified (blocked amino end (Gln)). Serine 39 carries an O-linked (Man...) serine glycan.

In terms of assembly, monomer. Post-translationally, the N-terminus is blocked.

It is found in the periplasm. It catalyses the reaction Eliminative cleavage of polysaccharides containing (1-&gt;4)-linked D-glucuronate or L-iduronate residues and (1-&gt;4)-alpha-linked 2-sulfoamino-2-deoxy-6-sulfo-D-glucose residues to give oligosaccharides with terminal 4-deoxy-alpha-D-gluc-4-enuronosyl groups at their non-reducing ends.. In terms of biological role, degrades heparin and heparan sulfate. Also implicated in the release of heparin-bound growth factors from the extracellular matrix. The protein is Heparin lyase I of Pedobacter heparinus (Flavobacterium heparinum).